A 485-amino-acid chain; its full sequence is uncharacterized protein (485 aa).

The Cytoplasmic segment spans residues Met-1–Ser-30. The chain crosses the membrane as a helical span at residues Gly-31 to Phe-51. Over Cys-52–Ile-485 the chain is Extracellular. An N-linked (GlcNAc...) asparagine glycan is attached at Asn-67. The phosphodiesterase stretch occupies residues Ser-74–Asp-404. Thr-118 (nucleophile) is an active-site residue. Asn-306, Asn-338, Asn-453, and Asn-467 each carry an N-linked (GlcNAc...) asparagine glycan.

The protein belongs to the nucleotide pyrophosphatase/phosphodiesterase family.

It localises to the membrane. This is an uncharacterized protein from Schizosaccharomyces pombe (strain 972 / ATCC 24843) (Fission yeast).